The sequence spans 325 residues: MASEVEDGVPVHEEFFLCGGVETQIIKCGPWTNLFDKQGVSKPKHLIFVIPGNPGLSPFYVPFAKALYSLVKGHFPVWIISHAGFCLTPKDKKILTAPQEPNAQEIEDIYGLNGQIEHKIAFLRAHVPKDVKLIFIGHSVGSYIALHVMNRAPELPVVHTFLLFPTIERMSESPNGKFATPFLCRFRYMLYAASYLIFKPCPEMIKSFIVQKVLEKMSFKSELRLTDLLQPFCLANAAYLGGQEMIHVVKRDDGIIKELLPKLTFYYGKTDGWCPVNYYEDMKRDFPEANLHLCEKGIPHAFVLGFSQEMAAMVADWINNRLPKK.

Serine 139 acts as the Nucleophile in catalysis. Catalysis depends on charge relay system residues aspartate 271 and histidine 300.

The protein belongs to the AB hydrolase superfamily. LDAH family.

The protein localises to the lipid droplet. It is found in the endoplasmic reticulum. It carries out the reaction a cholesterol ester + H2O = cholesterol + a fatty acid + H(+). In terms of biological role, probable serine lipid hydrolase associated with lipid droplets. Has low cholesterol esterase activity. Appears to lack triglyceride lipase activity. Involved in cholesterol and triglyceride homeostasis; stimulates cellular triglyceride accumulation and cellular cholesterol release. Acts antagonistically with PNPLA2/ATGL in regulation of cellular lipid stores. May regulate triglyceride accumulation indirectly through stimulation of PNPLA2/ATGL ubiquitination and proteasomal degradation. Promotes microtubule-dependent lipid droplet fusion. Highly expressed in macrophage-rich areas in atherosclerotic lesions, suggesting that it could promote cholesterol ester turnover in macrophages. The sequence is that of Lipid droplet-associated hydrolase from Rattus norvegicus (Rat).